The chain runs to 119 residues: Large ribosomal subunit protein uL18 (119 aa).

The protein belongs to the universal ribosomal protein uL18 family. In terms of assembly, part of the 50S ribosomal subunit; part of the 5S rRNA/L5/L18/L25 subcomplex. Contacts the 5S and 23S rRNAs.

In terms of biological role, this is one of the proteins that bind and probably mediate the attachment of the 5S RNA into the large ribosomal subunit, where it forms part of the central protuberance. This Clostridium botulinum (strain 657 / Type Ba4) protein is Large ribosomal subunit protein uL18.